The following is a 935-amino-acid chain: Clumping factor A (935 aa).

The signal sequence occupies residues 1 to 39 (MNMKKKEKHAIRKKSIGVASVLVGTLIGFGLLSSKEADA). A YSIRK-G/S signaling motif motif is present at residues 9 to 20 (HAIRKKSIGVAS). Disordered stretches follow at residues 34–205 (SKEA…VSQA) and 529–906 (FNNG…SEDE). The tract at residues 40 to 542 (SENSVTQSDS…SGSGDGIDKP (503 aa)) is ligand binding A region. A compositionally biased stretch (low complexity) spans 47-65 (SDSASNESKSNDSSSVSAA). Positions 71–105 (TNVSDTKTSSNTNNGETSVAQNPAQQETTQSSSTN) are enriched in polar residues. 2 stretches are compositionally biased toward low complexity: residues 106 to 132 (ATTEETPVTGEATTTTTNQANTPATTQ) and 143 to 162 (NQTSNETTSNDTNTVSSVNS). The segment covering 163–205 (PQNSTNAENVSTTQDTSTEATPSNNESAPQNTDASNKDVVSQA) has biased composition (polar residues). Positions 547–565 (QPDEPGEIEPIPEDSDSDP) are enriched in acidic residues. Residues 566–598 (GSDSGSDSNSDSGSDSGSDSTSDSGSDSASDSD) show a composition bias toward low complexity. Residues 599 to 863 (SASDSDSASD…DNDSDSDSNS (265 aa)) are compositionally biased toward acidic residues. Residues 864-882 (DSESGSNNNVVPPNSPKNG) are compositionally biased toward low complexity. Positions 889 to 898 (NEAKDSKEPL) are enriched in basic and acidic residues. An LPXTG sorting signal motif is present at residues 898 to 902 (LPDTG). Residue Thr901 is modified to Pentaglycyl murein peptidoglycan amidated threonine. A propeptide spans 902–935 (GSEDEANTSLIWGLLASLGSLLLFRRKKENKDKK) (removed by sortase).

The protein belongs to the serine-aspartate repeat-containing protein (SDr) family.

Its subcellular location is the secreted. The protein resides in the cell wall. Cell surface-associated protein implicated in virulence. Promotes bacterial attachment exclusively to the gamma-chain of human fibrinogen. Induces formation of bacterial clumps. The protein is Clumping factor A (clfA) of Staphylococcus aureus (strain Mu50 / ATCC 700699).